Here is a 252-residue protein sequence, read N- to C-terminus: MKIRALLVAMSVATVLTGCQNMDSNGLLSSGAEAFQAYSLSDAQVKTLSDQACQEMDSKATIAPANSEYAKRLTTIANALGNNINGQPVNYKVYMAKDVNAFAMANGCIRVYSGLMDMMTDNEVEAVIGHEMGHVALGHVKKGMQVALGTNAVRVAAASAGGIVGSLSQSQLGNLGEKLVNSQFSQRQEAEADDYSYDLLRQRGISPAGLATSFEKLAKLEEGRQSSMFDDHPASAERAQHIRDRMSADGIK.

The first 18 residues, 1–18, serve as a signal peptide directing secretion; that stretch reads MKIRALLVAMSVATVLTG. Cysteine 19 carries the N-palmitoyl cysteine lipid modification. Residue cysteine 19 is the site of S-diacylglycerol cysteine attachment. Cysteine 53 and cysteine 108 are disulfide-bonded. Histidine 130 provides a ligand contact to Zn(2+). Glutamate 131 is a catalytic residue. Residues histidine 134 and glutamate 189 each coordinate Zn(2+). The interval 224–252 is disordered; it reads RQSSMFDDHPASAERAQHIRDRMSADGIK.

It belongs to the peptidase M48B family. As to quaternary structure, interacts with Era and BepA. It depends on Zn(2+) as a cofactor. Post-translationally, the intramolecular disulfide bond improves the stability and the activity of LoiP. It forms even in the absence of the oxido-reductase DsbA.

It is found in the cell outer membrane. In terms of biological role, metalloprotease that cleaves substrates preferentially between Phe-Phe residues. Plays a role in response to some stress conditions. Seems to regulate the expression of speB. The chain is Metalloprotease LoiP (loiP) from Escherichia coli (strain K12).